Reading from the N-terminus, the 419-residue chain is 5-methylthioadenosine/S-adenosylhomocysteine deaminase (419 aa).

Positions 58 and 60 each coordinate Zn(2+). The substrate site is built by E87 and H179. H206 lines the Zn(2+) pocket. Substrate is bound by residues E209 and D294. Zn(2+) is bound at residue D294.

This sequence belongs to the metallo-dependent hydrolases superfamily. MTA/SAH deaminase family. The cofactor is Zn(2+).

The catalysed reaction is S-adenosyl-L-homocysteine + H2O + H(+) = S-inosyl-L-homocysteine + NH4(+). The enzyme catalyses S-methyl-5'-thioadenosine + H2O + H(+) = S-methyl-5'-thioinosine + NH4(+). Functionally, catalyzes the deamination of 5-methylthioadenosine and S-adenosyl-L-homocysteine into 5-methylthioinosine and S-inosyl-L-homocysteine, respectively. Is also able to deaminate adenosine. The protein is 5-methylthioadenosine/S-adenosylhomocysteine deaminase of Pyrococcus furiosus (strain ATCC 43587 / DSM 3638 / JCM 8422 / Vc1).